Reading from the N-terminus, the 263-residue chain is Phosphoinositide-3-kinase-interacting protein 1 (263 aa).

The first 21 residues, 1 to 21 (MLLAWVQAFLVSNMLLAEAYG), serve as a signal peptide directing secretion. Residues 22–168 (SGGCFWDNGH…NSKEKKDLGT (147 aa)) are Extracellular-facing. The Kringle domain maps to 24–101 (GCFWDNGHLY…EKRPCENLSC (78 aa)). Intrachain disulfides connect cysteine 25–cysteine 101, cysteine 46–cysteine 82, and cysteine 70–cysteine 96. N-linked (GlcNAc...) asparagine glycosylation is present at asparagine 98. A helical membrane pass occupies residues 169-189 (LGYVLGITMMVIIVAIGAGII). Residues 190-263 (LGYSYKRGKD…LMGQAGTPGA (74 aa)) lie on the Cytoplasmic side of the membrane. Polar residues predominate over residues 242-251 (QTPVDPQEGS). Residues 242–263 (QTPVDPQEGSTPLMGQAGTPGA) are disordered.

Its subcellular location is the cell membrane. Negative regulator of hepatic phosphatidylinositol 3-kinase (PI3K) activity. This is Phosphoinositide-3-kinase-interacting protein 1 (PIK3IP1) from Pongo abelii (Sumatran orangutan).